Consider the following 1451-residue polypeptide: DNA polymerase III PolC-type (1451 aa).

The region spanning 416–575 (FVIFDIETTG…YDTEALKKVF (160 aa)) is the Exonuclease domain.

It belongs to the DNA polymerase type-C family. PolC subfamily.

The protein localises to the cytoplasm. The catalysed reaction is DNA(n) + a 2'-deoxyribonucleoside 5'-triphosphate = DNA(n+1) + diphosphate. Functionally, required for replicative DNA synthesis. This DNA polymerase also exhibits 3' to 5' exonuclease activity. The sequence is that of DNA polymerase III PolC-type from Mycoplasma genitalium (strain ATCC 33530 / DSM 19775 / NCTC 10195 / G37) (Mycoplasmoides genitalium).